The following is a 320-amino-acid chain: Cytochrome f (320 aa).

Positions 1–35 are cleaved as a signal peptide; sequence MQTRKTFSWIKEEITRSISVLLMIYIITWASISNA. Heme contacts are provided by Tyr36, Cys56, Cys59, and His60. The chain crosses the membrane as a helical span at residues 286–306; the sequence is VQGLLFFLASVILAQIFLVLK.

The protein belongs to the cytochrome f family. In terms of assembly, the 4 large subunits of the cytochrome b6-f complex are cytochrome b6, subunit IV (17 kDa polypeptide, petD), cytochrome f and the Rieske protein, while the 4 small subunits are PetG, PetL, PetM and PetN. The complex functions as a dimer. The cofactor is heme.

It is found in the plastid. The protein resides in the chloroplast thylakoid membrane. Functionally, component of the cytochrome b6-f complex, which mediates electron transfer between photosystem II (PSII) and photosystem I (PSI), cyclic electron flow around PSI, and state transitions. This is Cytochrome f from Manihot esculenta (Cassava).